The sequence spans 478 residues: Lysosome membrane protein 2 (478 aa).

At 1–4 (MGRC) the chain is on the cytoplasmic side. Residues 5–27 (CFYTAGTLSLLLLVTSVTLLVAR) traverse the membrane as a helical segment. Residues 28–433 (VFQKAVDQSI…RLKSMINTTL (406 aa)) are Lumenal-facing. Residues N45, N68, and N105 are each glycosylated (N-linked (GlcNAc...) asparagine). Residues 155-191 (IIEAMLKAYQQKLFVTHTVDELLWGYKDEILSLIHVF) form an important for interaction with GBA1 region. N-linked (GlcNAc...) asparagine glycans are attached at residues N206, N224, N249, and N304. 2 disulfide bridges follow: C274-C329 and C312-C318. Residues N325, N412, and N430 are each glycosylated (N-linked (GlcNAc...) asparagine). Residues 434–459 (IITNIPYIIMALGVFFGLVFTWLACK) form a helical membrane-spanning segment. Over 460–478 (GQGSMDEGTADERAPLIRT) the chain is Cytoplasmic.

This sequence belongs to the CD36 family. In terms of assembly, interacts with GBA1. (Microbial infection) Interacts with enterovirus 71 capsid proteins VP1 and VP2.

It is found in the lysosome membrane. In terms of biological role, acts as a lysosomal receptor for glucosylceramidase (GBA1) targeting. (Microbial infection) Acts as a receptor for enterovirus 71. The protein is Lysosome membrane protein 2 (SCARB2) of Homo sapiens (Human).